A 261-amino-acid polypeptide reads, in one-letter code: Putative [LysW]-aminoadipate/[LysW]-glutamate kinase (261 aa).

Substrate-binding positions include 35–36 (GG), Arg-62, and Asn-162.

It belongs to the acetylglutamate kinase family. LysZ subfamily.

It is found in the cytoplasm. The enzyme catalyses [amino-group carrier protein]-C-terminal-N-(1,4-dicarboxybutan-1-yl)-L-glutamine + ATP = [amino-group carrier protein]-C-terminal-N-(1-carboxy-5-phosphooxy-5-oxopentan-1-yl)-L-glutamine + ADP. It catalyses the reaction [amino-group carrier protein]-C-terminal-gamma-(L-glutamyl)-L-glutamate + ATP = [amino-group carrier protein]-C-terminal-gamma-(5-phospho-L-glutamyl)-L-glutamate + ADP. Its pathway is amino-acid biosynthesis; L-lysine biosynthesis via AAA pathway; L-lysine from L-alpha-aminoadipate (Thermus route): step 2/5. It functions in the pathway amino-acid biosynthesis; L-arginine biosynthesis. In terms of biological role, involved in both the arginine and lysine biosynthetic pathways. Phosphorylates the LysW-bound precursors glutamate (for arginine biosynthesis), respectively alpha-aminoadipate (for lysine biosynthesis). The sequence is that of Putative [LysW]-aminoadipate/[LysW]-glutamate kinase from Pyrobaculum islandicum (strain DSM 4184 / JCM 9189 / GEO3).